Consider the following 315-residue polypeptide: MSLMNWFEDKRRFGGLIGAFIEKATKGYILNERERDKYIKIDTTKGLWTRCDSCENMLYVRFLKQNKRICEECGYHLQMSSIERIELLIDHGTWQPMYEDMVARDVLKFSDEDSYKNRVIFYQKRTGLTDAIQTGIGKLNKNLVALGVMDFQFMGGSMGSVVGEKITRLIEYAFKESLPLIIVCSSGGARMQEGTLSLMQMAKITSLLQFYQVRKKLFYIAILTYPTTGGVTASFGMLGDIIIAEPKAYIAFAGKRVIEQTLRQKIPDGFQVAESLFYSGLLDLIVPRTFLKGVLGEIFELYSLGVYKESNSYLF.

The CoA carboxyltransferase N-terminal domain occupies 47 to 315; that stretch reads LWTRCDSCEN…VYKESNSYLF (269 aa). Cysteine 51, cysteine 54, cysteine 70, and cysteine 73 together coordinate Zn(2+). A C4-type zinc finger spans residues 51–73; it reads CDSCENMLYVRFLKQNKRICEEC.

It belongs to the AccD/PCCB family. Acetyl-CoA carboxylase is a heterohexamer composed of biotin carboxyl carrier protein, biotin carboxylase and 2 subunits each of ACCase subunit alpha and ACCase plastid-coded subunit beta (accD). Zn(2+) serves as cofactor.

Its subcellular location is the plastid. The protein resides in the chloroplast stroma. The enzyme catalyses N(6)-carboxybiotinyl-L-lysyl-[protein] + acetyl-CoA = N(6)-biotinyl-L-lysyl-[protein] + malonyl-CoA. Its pathway is lipid metabolism; malonyl-CoA biosynthesis; malonyl-CoA from acetyl-CoA: step 1/1. Functionally, component of the acetyl coenzyme A carboxylase (ACC) complex. Biotin carboxylase (BC) catalyzes the carboxylation of biotin on its carrier protein (BCCP) and then the CO(2) group is transferred by the transcarboxylase to acetyl-CoA to form malonyl-CoA. This Physcomitrium patens (Spreading-leaved earth moss) protein is Acetyl-coenzyme A carboxylase carboxyl transferase subunit beta, chloroplastic.